Here is a 92-residue protein sequence, read N- to C-terminus: DNA-binding protein HU (92 aa).

This sequence belongs to the bacterial histone-like protein family. As to quaternary structure, homodimer.

Functionally, histone-like DNA-binding protein which is capable of wrapping DNA to stabilize it, and thus to prevent its denaturation under extreme environmental conditions. This chain is DNA-binding protein HU (hup), found in Buchnera aphidicola subsp. Acyrthosiphon pisum (strain APS) (Acyrthosiphon pisum symbiotic bacterium).